The primary structure comprises 302 residues: 33 kDa chaperonin (302 aa).

2 cysteine pairs are disulfide-bonded: Cys-247-Cys-249 and Cys-280-Cys-283.

Belongs to the HSP33 family. Post-translationally, under oxidizing conditions two disulfide bonds are formed involving the reactive cysteines. Under reducing conditions zinc is bound to the reactive cysteines and the protein is inactive.

The protein resides in the cytoplasm. Redox regulated molecular chaperone. Protects both thermally unfolding and oxidatively damaged proteins from irreversible aggregation. Plays an important role in the bacterial defense system toward oxidative stress. The protein is 33 kDa chaperonin of Prochlorococcus marinus (strain MIT 9301).